Consider the following 209-residue polypeptide: APC/C-CDH1 modulator 1 (209 aa).

The segment at 1–38 (MISPSKKRTILSSKNINQKPRAVVKGNELRSPSKRRSQ) is disordered. The residue at position 48 (Ser-48) is a Phosphoserine. The residue at position 161 (Thr-161) is a Phosphothreonine. Ser-202 carries the post-translational modification Phosphoserine.

In terms of assembly, interacts with CDH1, BMH1 and BMH2.

Its function is as follows. Negative regulator of GDH1, the activator protein that regulates the ubiquitin ligase activity and substrate specificity of the anaphase promoting complex/cyclosome (APC/C), and which is required for exit from mitosis, cytokinesis and formation of prereplicative complexes in G1. The chain is APC/C-CDH1 modulator 1 (ACM1) from Saccharomyces cerevisiae (strain ATCC 204508 / S288c) (Baker's yeast).